A 595-amino-acid polypeptide reads, in one-letter code: Aspartate--tRNA(Asp/Asn) ligase (595 aa).

E175 contacts L-aspartate. An aspartate region spans residues 199 to 202; it reads QQFK. The L-aspartate site is built by R221 and H451. An ATP-binding site is contributed by 221–223; that stretch reads RDE. E485 contacts ATP. An L-aspartate-binding site is contributed by R492. 537–540 is an ATP binding site; that stretch reads GVDR.

It belongs to the class-II aminoacyl-tRNA synthetase family. Type 1 subfamily. Homodimer.

Its subcellular location is the cytoplasm. It carries out the reaction tRNA(Asx) + L-aspartate + ATP = L-aspartyl-tRNA(Asx) + AMP + diphosphate. Its function is as follows. Aspartyl-tRNA synthetase with relaxed tRNA specificity since it is able to aspartylate not only its cognate tRNA(Asp) but also tRNA(Asn). Reaction proceeds in two steps: L-aspartate is first activated by ATP to form Asp-AMP and then transferred to the acceptor end of tRNA(Asp/Asn). The polypeptide is Aspartate--tRNA(Asp/Asn) ligase (Acidiphilium cryptum (strain JF-5)).